The sequence spans 228 residues: ATP phosphoribosyltransferase (228 aa).

Belongs to the ATP phosphoribosyltransferase family. Short subfamily. As to quaternary structure, heteromultimer composed of HisG and HisZ subunits.

The protein resides in the cytoplasm. The enzyme catalyses 1-(5-phospho-beta-D-ribosyl)-ATP + diphosphate = 5-phospho-alpha-D-ribose 1-diphosphate + ATP. The protein operates within amino-acid biosynthesis; L-histidine biosynthesis; L-histidine from 5-phospho-alpha-D-ribose 1-diphosphate: step 1/9. Its function is as follows. Catalyzes the condensation of ATP and 5-phosphoribose 1-diphosphate to form N'-(5'-phosphoribosyl)-ATP (PR-ATP). Has a crucial role in the pathway because the rate of histidine biosynthesis seems to be controlled primarily by regulation of HisG enzymatic activity. In Acinetobacter baylyi (strain ATCC 33305 / BD413 / ADP1), this protein is ATP phosphoribosyltransferase.